Here is an 82-residue protein sequence, read N- to C-terminus: Small ribosomal subunit protein uS17 (82 aa).

The protein belongs to the universal ribosomal protein uS17 family. In terms of assembly, part of the 30S ribosomal subunit.

One of the primary rRNA binding proteins, it binds specifically to the 5'-end of 16S ribosomal RNA. In Thermosynechococcus vestitus (strain NIES-2133 / IAM M-273 / BP-1), this protein is Small ribosomal subunit protein uS17.